Here is a 393-residue protein sequence, read N- to C-terminus: MTISSARTARRLPDLTSSAFLVIAFLTGIAGALQLPTLSLFLSTEVQVRPFMVGLFYTGSAVIGIVVSQILATYSDRQGDRKTLILQCCLLGALACLLYAWNRNYFVLLFIGVLLSSFGSTANPQLFALAREHADRTGRGAAMFSSVMRAQISLSWVIGPPVAFALALGFGFPAMYLTAAVVFVLCGLLVWLLLPSMPKTRVKSAATLESPRQNRRDTLLLFTACTLMWTCNGIYLINMPLYLVNELRLPEKLAGVMMGTAAGLEIPVMLLAGYLTSRLGKRLLMRLAVIAGLIFYTGLTLLNGSWALLALQLLNAIFIGILAGMGMLYFQDLMPGQAGAATTLFTNTTRVGWIISGSLAGIVAEVWSYHAGFVIAIAMLAGAAVCMWRIRDV.

A run of 12 helical transmembrane segments spans residues 22-42 (VIAFLTGIAGALQLPTLSLFL), 51-71 (FMVGLFYTGSAVIGIVVSQIL), 82-102 (KTLILQCCLLGALACLLYAWN), 107-127 (VLLFIGVLLSSFGSTANPQLF), 152-172 (ISLSWVIGPPVAFALALGFGF), 174-194 (AMYLTAAVVFVLCGLLVWLLL), 219-239 (LLLFTACTLMWTCNGIYLINM), 253-273 (LAGVMMGTAAGLEIPVMLLAG), 287-307 (LAVIAGLIFYTGLTLLNGSWA), 308-328 (LLALQLLNAIFIGILAGMGML), 344-364 (LFTNTTRVGWIISGSLAGIVA), and 366-386 (VWSYHAGFVIAIAMLAGAAVC).

The protein belongs to the major facilitator superfamily. Set transporter family.

The protein resides in the cell inner membrane. Functionally, involved in the efflux of sugars. The physiological role may be the reduction of the intracellular concentration of toxic sugars or sugar metabolites. Transports IPTG, lactose and arabinose. The sequence is that of Sugar efflux transporter A (sotA) from Dickeya chrysanthemi (Pectobacterium chrysanthemi).